A 131-amino-acid chain; its full sequence is Small ribosomal subunit protein uS11 (131 aa).

This sequence belongs to the universal ribosomal protein uS11 family. Part of the 30S ribosomal subunit. Interacts with proteins S7 and S18. Binds to IF-3.

Located on the platform of the 30S subunit, it bridges several disparate RNA helices of the 16S rRNA. Forms part of the Shine-Dalgarno cleft in the 70S ribosome. The chain is Small ribosomal subunit protein uS11 from Clostridium novyi (strain NT).